We begin with the raw amino-acid sequence, 71 residues long: Small ribosomal subunit protein bS21 (71 aa).

The protein belongs to the bacterial ribosomal protein bS21 family.

This chain is Small ribosomal subunit protein bS21, found in Buchnera aphidicola subsp. Schizaphis graminum (strain Sg).